The following is a 358-amino-acid chain: Probable cinnamyl alcohol dehydrogenase (358 aa).

Cys-48 lines the Zn(2+) pocket. Ser-50 serves as a coordination point for NADP(+). Positions 70, 71, 101, 104, 107, 115, and 164 each coordinate Zn(2+). NADP(+)-binding positions include Thr-168, 189–194 (GLGGVG), 212–217 (SSSDKK), Thr-252, Gly-276, and 299–301 (SFV).

The protein belongs to the zinc-containing alcohol dehydrogenase family. In terms of assembly, homodimer. Zn(2+) serves as cofactor. Most actively expressed in stem, hypocotyl and root tissue.

It carries out the reaction (E)-cinnamyl alcohol + NADP(+) = (E)-cinnamaldehyde + NADPH + H(+). The enzyme catalyses (E)-coniferol + NADP(+) = (E)-coniferaldehyde + NADPH + H(+). It catalyses the reaction (E)-sinapyl alcohol + NADP(+) = (E)-sinapaldehyde + NADPH + H(+). The catalysed reaction is (E)-4-coumaroyl alcohol + NADP(+) = (E)-4-coumaraldehyde + NADPH + H(+). It carries out the reaction (E)-caffeyl alcohol + NADP(+) = (E)-caffeyl aldehyde + NADPH + H(+). Its pathway is aromatic compound metabolism; phenylpropanoid biosynthesis. This protein catalyzes the final step in a branch of phenylpropanoid synthesis specific for production of lignin monomers. It acts on coniferyl-, sinapyl-, 4-coumaryl- and cinnamyl-alcohol. This is Probable cinnamyl alcohol dehydrogenase (CAD2) from Medicago sativa (Alfalfa).